The following is a 505-amino-acid chain: Deoxyguanosinetriphosphate triphosphohydrolase (505 aa).

One can recognise an HD domain in the interval 66-273 (RLTHSMEVQQ…MEAADDISYC (208 aa)).

It belongs to the dGTPase family. Type 1 subfamily. In terms of assembly, homotetramer. Mg(2+) serves as cofactor.

The enzyme catalyses dGTP + H2O = 2'-deoxyguanosine + triphosphate + H(+). Functionally, dGTPase preferentially hydrolyzes dGTP over the other canonical NTPs. This is Deoxyguanosinetriphosphate triphosphohydrolase from Shigella flexneri.